A 375-amino-acid chain; its full sequence is Chaperone protein DnaJ (375 aa).

Residues 4-68 (DYYETLGVDR…ETRARYDQFG (65 aa)) form the J domain. The CR-type zinc-finger motif lies at 134 to 216 (GGEKEIRIPH…CGGAGRKQET (83 aa)). Residues Cys-147, Cys-150, Cys-164, Cys-167, Cys-190, Cys-193, Cys-204, and Cys-207 each contribute to the Zn(2+) site. 4 CXXCXGXG motif repeats span residues 147–154 (CQVCNGSG), 164–171 (CSTCNGAG), 190–197 (CPDCNGAG), and 204–211 (CDACGGAG).

The protein belongs to the DnaJ family. Homodimer. Requires Zn(2+) as cofactor.

It localises to the cytoplasm. Functionally, participates actively in the response to hyperosmotic and heat shock by preventing the aggregation of stress-denatured proteins and by disaggregating proteins, also in an autonomous, DnaK-independent fashion. Unfolded proteins bind initially to DnaJ; upon interaction with the DnaJ-bound protein, DnaK hydrolyzes its bound ATP, resulting in the formation of a stable complex. GrpE releases ADP from DnaK; ATP binding to DnaK triggers the release of the substrate protein, thus completing the reaction cycle. Several rounds of ATP-dependent interactions between DnaJ, DnaK and GrpE are required for fully efficient folding. Also involved, together with DnaK and GrpE, in the DNA replication of plasmids through activation of initiation proteins. The sequence is that of Chaperone protein DnaJ from Rippkaea orientalis (strain PCC 8801 / RF-1) (Cyanothece sp. (strain PCC 8801)).